We begin with the raw amino-acid sequence, 352 residues long: C-C chemokine receptor type 5 (352 aa).

Residues 1–30 lie on the Extracellular side of the membrane; it reads MDYQVSSPTYDIDYYTSEPCQKVNVKQIAA. Tyr-3 is modified (sulfotyrosine). O-linked (GalNAc...) serine glycans are attached at residues Ser-6 and Ser-7. Residues Tyr-10, Tyr-14, and Tyr-15 each carry the sulfotyrosine modification. Cystine bridges form between Cys-20–Cys-269 and Cys-101–Cys-178. Residues 31–58 traverse the membrane as a helical segment; sequence RLLPPLYSLVFIFGFVGNILVVLILINC. Residues 59–68 are Cytoplasmic-facing; it reads KRLKSMTDIY. A helical membrane pass occupies residues 69–89; it reads LLNLAISDLFFLLTVPFWAHY. Residues 90–102 are Extracellular-facing; it reads AAAQWDFGNTMCQ. Residues 103–124 traverse the membrane as a helical segment; that stretch reads LLTGLYFIGFFSGIFFIILLTI. The Cytoplasmic segment spans residues 125–141; sequence DRYLAIVHAVFALKART. The chain crosses the membrane as a helical span at residues 142-166; the sequence is VTFGVVTSVITWVVAVFASLPGIIF. The Extracellular segment spans residues 167–198; that stretch reads TRSQREGLHYTCSSHFPYSQYQFWKNFQTLKI. Residues 199–218 form a helical membrane-spanning segment; it reads VILGLVLPLLVMVICYSGIL. Residues 219–235 lie on the Cytoplasmic side of the membrane; the sequence is KTLLRCRNEKKRHRAVR. A helical transmembrane segment spans residues 236–260; that stretch reads LIFTIMIVYFLFWAPYNIVLLLNTF. Topologically, residues 261–277 are extracellular; sequence QEFFGLNNCSSSNRLDQ. The chain crosses the membrane as a helical span at residues 278–301; the sequence is AMQVTETLGMTHCCINPIIYAFVG. At 302 to 352 the chain is on the cytoplasmic side; the sequence is EKFRNYLLVFFQKHIAKRFCKCCYIFQQEAPERASSVYTRSTGEQEISVGL. 3 S-palmitoyl cysteine lipidation sites follow: Cys-321, Cys-323, and Cys-324. Phosphoserine; by BARK1 is present on residues Ser-336, Ser-337, Ser-342, and Ser-349.

It belongs to the G-protein coupled receptor 1 family. Interacts with PRAF2. Efficient ligand binding to CCL3/MIP-1alpha and CCL4/MIP-1beta requires sulfation, O-glycosylation and sialic acid modifications. Glycosylation on Ser-6 is required for efficient binding of CCL4. Interacts with GRK2. Interacts with ARRB1 and ARRB2. Interacts with CNIH4. Interacts with S100A4; this interaction stimulates T-lymphocyte chemotaxis. Post-translationally, sulfated on at least 2 of the N-terminal tyrosines. Sulfation is required for efficient binding of the chemokines, CCL3 and CCL4. In terms of processing, palmitoylation in the C-terminal is important for cell surface expression. Phosphorylation on serine residues in the C-terminal is stimulated by binding CC chemokines especially by APO-RANTES. Post-translationally, O-glycosylated, but not N-glycosylated. Ser-6 appears to be the major site even if Ser-7 may be also O-glycosylated. Also sialylated glycans present which contribute to chemokine binding. Thr-16 and Ser-17 may also be glycosylated and, if so, with small moieties such as a T-antigen.

The protein localises to the cell membrane. Functionally, receptor for a number of inflammatory CC-chemokines including CCL3/MIP-1-alpha, CCL4/MIP-1-beta and RANTES and subsequently transduces a signal by increasing the intracellular calcium ion level. May play a role in the control of granulocytic lineage proliferation or differentiation. Participates in T-lymphocyte migration to the infection site by acting as a chemotactic receptor. This Rhinopithecus bieti (Black snub-nosed monkey) protein is C-C chemokine receptor type 5 (CCR5).